We begin with the raw amino-acid sequence, 820 residues long: Leucine--tRNA ligase (820 aa).

Residues 42-52 (PYPSGDLHMGH) carry the 'HIGH' region motif. The 'KMSKS' region motif lies at 576 to 580 (KMSKS). Position 579 (lysine 579) interacts with ATP.

It belongs to the class-I aminoacyl-tRNA synthetase family.

The protein localises to the cytoplasm. It catalyses the reaction tRNA(Leu) + L-leucine + ATP = L-leucyl-tRNA(Leu) + AMP + diphosphate. The sequence is that of Leucine--tRNA ligase from Coxiella burnetii (strain RSA 493 / Nine Mile phase I).